The chain runs to 453 residues: GTPase Der (453 aa).

2 EngA-type G domains span residues Pro4–Gly169 and Thr177–Gln352. Residues Gly10–Ser17, Asp57–Leu61, Asn120–Glu123, Gly183–Ser190, Asp230–Ile234, and Asn295–Asp298 contribute to the GTP site. Residues Arg353–Lys438 enclose the KH-like domain.

The protein belongs to the TRAFAC class TrmE-Era-EngA-EngB-Septin-like GTPase superfamily. EngA (Der) GTPase family. As to quaternary structure, associates with the 50S ribosomal subunit.

Functionally, GTPase that plays an essential role in the late steps of ribosome biogenesis. This chain is GTPase Der, found in Trichodesmium erythraeum (strain IMS101).